A 517-amino-acid chain; its full sequence is Zinc finger protein 215 (517 aa).

Residues 48-126 (RQKFRHFQYL…EDMVTLIEDV (79 aa)) enclose the SCAN box domain. One can recognise a KRAB domain in the interval 164–237 (VTFKDVVVEF…EKEIPRKTIF (74 aa)). 4 consecutive C2H2-type zinc fingers follow at residues 379-401 (YECY…QIIH), 407-429 (YKCS…QKLH), 462-484 (YECV…QMIH), and 490-512 (FKCK…QKLH).

It belongs to the krueppel C2H2-type zinc-finger protein family.

Its subcellular location is the nucleus. May be involved in transcriptional regulation. This chain is Zinc finger protein 215 (ZNF215), found in Pongo abelii (Sumatran orangutan).